Consider the following 160-residue polypeptide: SsrA-binding protein (160 aa).

The protein belongs to the SmpB family.

It localises to the cytoplasm. Required for rescue of stalled ribosomes mediated by trans-translation. Binds to transfer-messenger RNA (tmRNA), required for stable association of tmRNA with ribosomes. tmRNA and SmpB together mimic tRNA shape, replacing the anticodon stem-loop with SmpB. tmRNA is encoded by the ssrA gene; the 2 termini fold to resemble tRNA(Ala) and it encodes a 'tag peptide', a short internal open reading frame. During trans-translation Ala-aminoacylated tmRNA acts like a tRNA, entering the A-site of stalled ribosomes, displacing the stalled mRNA. The ribosome then switches to translate the ORF on the tmRNA; the nascent peptide is terminated with the 'tag peptide' encoded by the tmRNA and targeted for degradation. The ribosome is freed to recommence translation, which seems to be the essential function of trans-translation. The sequence is that of SsrA-binding protein from Haemophilus ducreyi (strain 35000HP / ATCC 700724).